We begin with the raw amino-acid sequence, 28 residues long: Cruzioseptin-4 (28 aa).

Residue glutamate 25 is modified to Glutamic acid 1-amide. The propeptide occupies 27-28 (EH).

Expressed by the skin glands.

Its subcellular location is the secreted. Functionally, has antimicrobial activity. This Cruziohyla calcarifer (Splendid leaf frog) protein is Cruzioseptin-4.